Here is a 323-residue protein sequence, read N- to C-terminus: Ubiquinone biosynthesis protein COQ4, mitochondrial (323 aa).

Zn(2+) is bound by residues His203, Asp204, His207, and Glu219.

It belongs to the COQ4 family. Component of a multi-subunit COQ enzyme complex, composed of at least COQ3, COQ4, COQ5, COQ6, COQ7 and COQ9. Zn(2+) serves as cofactor.

The protein localises to the mitochondrion inner membrane. The catalysed reaction is a 4-hydroxy-3-methoxy-5-(all-trans-polyprenyl)benzoate + H(+) = a 2-methoxy-6-(all-trans-polyprenyl)phenol + CO2. It participates in cofactor biosynthesis; ubiquinone biosynthesis. In terms of biological role, lyase that catalyzes the C1-decarboxylation of 4-hydroxy-3-methoxy-5-(all-trans-polyprenyl)benzoic acid into 2-methoxy-6-(all-trans-polyprenyl)phenol during ubiquinone biosynthesis. This Eremothecium gossypii (strain ATCC 10895 / CBS 109.51 / FGSC 9923 / NRRL Y-1056) (Yeast) protein is Ubiquinone biosynthesis protein COQ4, mitochondrial.